A 194-amino-acid chain; its full sequence is Ubiquitin-conjugating enzyme E2 T (194 aa).

A UBC core domain is found at 2 to 152 (QRVSRLKREM…AKKWTAEHAI (151 aa)). Cys-86 (glycyl thioester intermediate) is an active-site residue. Basic and acidic residues-rich tracts occupy residues 158–170 (CVET…ENKN) and 185–194 (NLEHTKKVCL). The segment at 158–194 (CVETDGKTPENKNLKTSHKREALSAQENLEHTKKVCL) is disordered.

The protein belongs to the ubiquitin-conjugating enzyme family.

It localises to the nucleus. It carries out the reaction S-ubiquitinyl-[E1 ubiquitin-activating enzyme]-L-cysteine + [E2 ubiquitin-conjugating enzyme]-L-cysteine = [E1 ubiquitin-activating enzyme]-L-cysteine + S-ubiquitinyl-[E2 ubiquitin-conjugating enzyme]-L-cysteine.. Its pathway is protein modification; protein ubiquitination. Accepts ubiquitin from the E1 complex and catalyzes its covalent attachment to other proteins. Catalyzes monoubiquitination. Involved in DNA repair. This chain is Ubiquitin-conjugating enzyme E2 T (ube2t), found in Danio rerio (Zebrafish).